The chain runs to 157 residues: Ribonuclease (157 aa).

The first 34 residues, 1-34 (MMKMEGIALKKRLSWISVCLLVLVSAAGMLFSTA), serve as a signal peptide directing secretion. A propeptide spanning residues 35 to 47 (AKTETSSHKAHTE) is cleaved from the precursor. Catalysis depends on E120, which acts as the Proton acceptor. The active-site Proton donor is H149.

It belongs to the ribonuclease N1/T1 family.

It localises to the secreted. In terms of biological role, hydrolyzes phosphodiester bonds in RNA, poly- and oligoribonucleotides resulting in 3'-nucleoside monophosphates via 2',3'-cyclophosphate intermediates. The polypeptide is Ribonuclease (Bacillus amyloliquefaciens (Bacillus velezensis)).